The primary structure comprises 502 residues: Probable cytosol aminopeptidase (502 aa).

Mn(2+)-binding residues include Lys269 and Asp274. The active site involves Lys281. Mn(2+) is bound by residues Asp292, Asp351, and Glu353. Residue Arg355 is part of the active site.

The protein belongs to the peptidase M17 family. Mn(2+) is required as a cofactor.

It is found in the cytoplasm. The enzyme catalyses Release of an N-terminal amino acid, Xaa-|-Yaa-, in which Xaa is preferably Leu, but may be other amino acids including Pro although not Arg or Lys, and Yaa may be Pro. Amino acid amides and methyl esters are also readily hydrolyzed, but rates on arylamides are exceedingly low.. It catalyses the reaction Release of an N-terminal amino acid, preferentially leucine, but not glutamic or aspartic acids.. Functionally, presumably involved in the processing and regular turnover of intracellular proteins. Catalyzes the removal of unsubstituted N-terminal amino acids from various peptides. This Photobacterium profundum (strain SS9) protein is Probable cytosol aminopeptidase.